The sequence spans 788 residues: Integrin beta-6 (788 aa).

The first 21 residues, 1–21 (MGIELLCLFFLFLGRNDHVQG), serve as a signal peptide directing secretion. In terms of domain architecture, PSI spans 22–71 (GCALGGAETCEDCLLIGPQCAWCAQENFTHPSGVGERCDTPANLLAKGCQ). The Extracellular segment spans residues 22 to 709 (GCALGGAETC…KDCPKPPNIP (688 aa)). 19 disulfide bridges follow: cysteine 23–cysteine 41, cysteine 31–cysteine 454, cysteine 34–cysteine 59, cysteine 44–cysteine 70, cysteine 197–cysteine 204, cysteine 252–cysteine 293, cysteine 394–cysteine 406, cysteine 426–cysteine 452, cysteine 456–cysteine 476, cysteine 467–cysteine 479, cysteine 481–cysteine 490, cysteine 492–cysteine 519, cysteine 502–cysteine 517, cysteine 511–cysteine 522, cysteine 524–cysteine 537, cysteine 539–cysteine 560, cysteine 544–cysteine 558, cysteine 552–cysteine 563, and cysteine 565–cysteine 574. Asparagine 48 and asparagine 97 each carry an N-linked (GlcNAc...) asparagine glycan. The 241-residue stretch at 131-371 (YPVDLYYLMD…QLIISAYEEL (241 aa)) folds into the VWFA domain. Residues aspartate 140, serine 142, and serine 144 each coordinate Mg(2+). The Ca(2+) site is built by serine 144, aspartate 147, aspartate 148, and glutamate 179. 4 residues coordinate Ca(2+): asparagine 235, aspartate 237, proline 239, and glutamate 240. Residue glutamate 240 coordinates Mg(2+). Asparagine 260 carries an N-linked (GlcNAc...) asparagine glycan. Aspartate 271 and lysine 355 together coordinate Ca(2+). Residues asparagine 387 and asparagine 396 are each glycosylated (N-linked (GlcNAc...) asparagine). I-EGF domains follow at residues 456-491 (CQKE…PRCE), 492-538 (CGED…PYCQ), 539-575 (CDNF…EYCN), and 576-615 (CTTS…PTCE). Residues asparagine 463 and asparagine 471 are each glycosylated (N-linked (GlcNAc...) asparagine). N-linked (GlcNAc...) asparagine glycosylation is present at asparagine 541. Asparagine 575 is a glycosylation site (N-linked (GlcNAc...) asparagine). Disulfide bonds link cysteine 576–cysteine 599, cysteine 583–cysteine 597, cysteine 591–cysteine 602, cysteine 604–cysteine 614, cysteine 617–cysteine 620, cysteine 624–cysteine 670, cysteine 630–cysteine 649, cysteine 633–cysteine 645, and cysteine 678–cysteine 702. Residues 710-730 (MIMLGVSLAILLIGVVLLCIW) form a helical membrane-spanning segment. Positions 731–758 (KLLVSFHDRKEVAKFEAERSKAKWQTGT) are interaction with HAX1. The Cytoplasmic portion of the chain corresponds to 731–788 (KLLVSFHDRKEVAKFEAERSKAKWQTGTNPLYRGSTSTFKNVTYKHREKQKVDLSTDC).

The protein belongs to the integrin beta chain family. Heterodimer of an alpha and a beta subunit. Interacts with FLNB. Interacts with HAX1. ITGAV:ITGB6 interacts with FBN1. ITGAV:ITGB6 interacts with TGFB1. In terms of assembly, (Microbial infection) Integrin ITGAV:ITGB6 interacts with coxsackievirus A9, coxsackievirus B1 capsid proteins. As to quaternary structure, (Microbial infection) Integrin ITGAV:ITGB6 interacts with herpes simplex virus-1/HHV-1 gH:gL proteins.

It is found in the cell membrane. The protein localises to the cell junction. Its subcellular location is the focal adhesion. Integrin alpha-V:beta-6 (ITGAV:ITGB6) is a receptor for fibronectin and cytotactin. It recognizes the sequence R-G-D in its ligands. Internalization of integrin alpha-V/beta-6 via clathrin-mediated endocytosis promotes carcinoma cell invasion. ITGAV:ITGB6 acts as a receptor for fibrillin-1 (FBN1) and mediates R-G-D-dependent cell adhesion to FBN1. Integrin alpha-V:beta-6 (ITGAV:ITGB6) mediates R-G-D-dependent release of transforming growth factor beta-1 (TGF-beta-1) from regulatory Latency-associated peptide (LAP), thereby playing a key role in TGF-beta-1 activation. Its function is as follows. (Microbial infection) Integrin ITGAV:ITGB6 acts as a receptor for Coxsackievirus A9 and Coxsackievirus B1. In terms of biological role, (Microbial infection) Integrin ITGAV:ITGB6 acts as a receptor for Herpes simplex virus-1/HHV-1. The protein is Integrin beta-6 (ITGB6) of Homo sapiens (Human).